Consider the following 551-residue polypeptide: CTP synthase (551 aa).

An amidoligase domain region spans residues M1–I273. S21 contributes to the CTP binding site. Residue S21 participates in UTP binding. Residues S22–L27 and D79 each bind ATP. Residues D79 and E147 each contribute to the Mg(2+) site. Residues D154–E156, K194–Q199, and K230 each bind CTP. UTP is bound by residues K194 to Q199 and K230. The Glutamine amidotransferase type-1 domain maps to T298–G551. G360 contacts L-glutamine. C387 functions as the Nucleophile; for glutamine hydrolysis in the catalytic mechanism. L-glutamine is bound by residues L388–Q391, E411, and R479. Active-site residues include H524 and E526.

It belongs to the CTP synthase family. Homotetramer.

The catalysed reaction is UTP + L-glutamine + ATP + H2O = CTP + L-glutamate + ADP + phosphate + 2 H(+). The enzyme catalyses L-glutamine + H2O = L-glutamate + NH4(+). It carries out the reaction UTP + NH4(+) + ATP = CTP + ADP + phosphate + 2 H(+). It participates in pyrimidine metabolism; CTP biosynthesis via de novo pathway; CTP from UDP: step 2/2. Allosterically activated by GTP, when glutamine is the substrate; GTP has no effect on the reaction when ammonia is the substrate. The allosteric effector GTP functions by stabilizing the protein conformation that binds the tetrahedral intermediate(s) formed during glutamine hydrolysis. Inhibited by the product CTP, via allosteric rather than competitive inhibition. Its function is as follows. Catalyzes the ATP-dependent amination of UTP to CTP with either L-glutamine or ammonia as the source of nitrogen. Regulates intracellular CTP levels through interactions with the four ribonucleotide triphosphates. The polypeptide is CTP synthase (Desulfotalea psychrophila (strain LSv54 / DSM 12343)).